Here is a 352-residue protein sequence, read N- to C-terminus: Proton-activated chloride channel (352 aa).

The interval Met-1–Pro-55 is disordered. Residues Met-1 to Asn-65 are Cytoplasmic-facing. Over residues Leu-15–Glu-38 the composition is skewed to acidic residues. A helical transmembrane segment spans residues Phe-66–Val-86. Residues Tyr-87–Asp-299 are Extracellular-facing. A helical membrane pass occupies residues Ile-300 to Phe-320. Topologically, residues Lys-321–Ser-352 are cytoplasmic.

Belongs to the proton-activated chloride channel family.

It is found in the cell membrane. It catalyses the reaction chloride(in) = chloride(out). Its function is as follows. Chloride channel gated by pH that facilitates the entry of chloride ions into cells upon exposure to extracellular acidic pH. This chain is Proton-activated chloride channel, found in Xenopus tropicalis (Western clawed frog).